The primary structure comprises 232 residues: GTP cyclohydrolase III (232 aa).

This sequence belongs to the archaeal-type GTP cyclohydrolase family.

The catalysed reaction is GTP + 3 H2O = 2-amino-5-formylamino-6-(5-phospho-D-ribosylamino)pyrimidin-4(3H)-one + 2 phosphate + 2 H(+). Functionally, catalyzes the formation of 2-amino-5-formylamino-6-ribofuranosylamino-4(3H)-pyrimidinone ribonucleotide monophosphate and inorganic phosphate from GTP. Also has an independent pyrophosphate phosphohydrolase activity. The chain is GTP cyclohydrolase III from Saccharolobus islandicus (strain Y.G.57.14 / Yellowstone #1) (Sulfolobus islandicus).